The chain runs to 382 residues: Anhydro-N-acetylmuramic acid kinase (382 aa).

22–29 serves as a coordination point for ATP; that stretch reads GTSMDGVD.

It belongs to the anhydro-N-acetylmuramic acid kinase family.

It carries out the reaction 1,6-anhydro-N-acetyl-beta-muramate + ATP + H2O = N-acetyl-D-muramate 6-phosphate + ADP + H(+). The protein operates within amino-sugar metabolism; 1,6-anhydro-N-acetylmuramate degradation. Its pathway is cell wall biogenesis; peptidoglycan recycling. Its function is as follows. Catalyzes the specific phosphorylation of 1,6-anhydro-N-acetylmuramic acid (anhMurNAc) with the simultaneous cleavage of the 1,6-anhydro ring, generating MurNAc-6-P. Is required for the utilization of anhMurNAc either imported from the medium or derived from its own cell wall murein, and thus plays a role in cell wall recycling. The sequence is that of Anhydro-N-acetylmuramic acid kinase from Burkholderia orbicola (strain AU 1054).